The following is a 100-amino-acid chain: NADH-quinone oxidoreductase subunit K (100 aa).

Helical transmembrane passes span 3–23, 29–49, and 60–80; these read PTSY…VGVI, LVLF…LVTF, and IVVF…LALL.

It belongs to the complex I subunit 4L family. As to quaternary structure, NDH-1 is composed of 14 different subunits. Subunits NuoA, H, J, K, L, M, N constitute the membrane sector of the complex.

The protein resides in the cell membrane. It catalyses the reaction a quinone + NADH + 5 H(+)(in) = a quinol + NAD(+) + 4 H(+)(out). Functionally, NDH-1 shuttles electrons from NADH, via FMN and iron-sulfur (Fe-S) centers, to quinones in the respiratory chain. The immediate electron acceptor for the enzyme in this species is believed to be ubiquinone. Couples the redox reaction to proton translocation (for every two electrons transferred, four hydrogen ions are translocated across the cytoplasmic membrane), and thus conserves the redox energy in a proton gradient. The chain is NADH-quinone oxidoreductase subunit K from Roseiflexus castenholzii (strain DSM 13941 / HLO8).